The following is a 354-amino-acid chain: Uroporphyrinogen decarboxylase (354 aa).

Substrate contacts are provided by residues 27–31 (RQAGR), Asp-77, Tyr-153, Thr-208, and His-326.

The protein belongs to the uroporphyrinogen decarboxylase family. Homodimer.

The protein resides in the cytoplasm. It carries out the reaction uroporphyrinogen III + 4 H(+) = coproporphyrinogen III + 4 CO2. It functions in the pathway porphyrin-containing compound metabolism; protoporphyrin-IX biosynthesis; coproporphyrinogen-III from 5-aminolevulinate: step 4/4. Functionally, catalyzes the decarboxylation of four acetate groups of uroporphyrinogen-III to yield coproporphyrinogen-III. This Neisseria gonorrhoeae (strain ATCC 700825 / FA 1090) protein is Uroporphyrinogen decarboxylase.